Consider the following 843-residue polypeptide: MPLSYPHFRKLLLLDDEAGPLEEELPRLADEGLNRRVAEDLNLQLPNVSIPWTHKVGNFTGLYSSTVPTFNPDWLTPSFPDIHLHQDLIHKCEQFVGPLTKNELRRLKLVMPSRFFPKVTKYFPMEKGIKPYYPDNVVNHYFKTRHYLHTLWKAGILYKRESTRSASFCGSPYSWEQELQHGSTSINDSKGHGTESLCTQSSGILSRPSAGSSIQGKFQQSRLGLQQKQGQLANGKQGRSGRIRSWVHTPTRWPVGVESTGTGCAYNIASRSASCFHQSAVREKTNPSLSTSKRHSSTGHAVELHSVPPGSVRSEGKGSVFSCWWLQFRDTEPCSDYCLSHIINLLEDWGPCYEHGQHHIRTPRTPARVTGGVFLVDKNPHNTTESRLVVDFSQFSRGNTRVSWPKFAVPNLQSLTNLLSSNLSWLSLDVSAAFYHLPLHPAAMPHLLVGSCGLSRYVARLSSTSRIHDHQHGTMQNLHNSCSRNLYVSLLLLFQTLGRKLHLYSHPIILGFRKIPMGVGLSPFLLAQFTSAICSVVRRAFPHCLAFSYMDDLVLGAKSVQHLESLYTAVTNFLLSVGIHLNTSKTKRWGYTLNFMGYVIGSWGSLPQDHIVQKLKDCFRKLPVNRPIDWKVCQRIVGLLGFAAPFTQCGYPALMPLYACITAKQAFVFSPTYKAFLCQQYMNLYPVARQRPGLCQVFADATPTGWGLAIGHQRMRGTFVAPLPIHTAELLAACFARSRSGAKLIGTDNSVVLSRKYTSFPWLLGCAANWILRGTSFVYVPSALNPADDPSRGRLGLYRPLLRLPFQPTTGRTSLYAASPSVPSHLPDRVHFASPLHVAWRPP.

The terminal protein domain (TP) stretch occupies residues 1–177; it reads MPLSYPHFRK…FCGSPYSWEQ (177 aa). A spacer region spans residues 178-346; sequence ELQHGSTSIN…YCLSHIINLL (169 aa). Disordered regions lie at residues 202 to 221 and 285 to 310; these read SGILSRPSAGSSIQGKFQQS and TNPSLSTSKRHSSTGHAVELHSVPPG. The tract at residues 347–690 is polymerase/reverse transcriptase domain (RT); it reads EDWGPCYEHG…YMNLYPVARQ (344 aa). A Reverse transcriptase domain is found at 357-600; it reads QHHIRTPRTP…YTLNFMGYVI (244 aa). Mg(2+) contacts are provided by D429, D551, and D552.

Belongs to the hepadnaviridae P protein family.

The catalysed reaction is DNA(n) + a 2'-deoxyribonucleoside 5'-triphosphate = DNA(n+1) + diphosphate. It catalyses the reaction Endonucleolytic cleavage to 5'-phosphomonoester.. Activated by host HSP70 and HSP40 in vitro to be able to bind the epsilon loop of the pgRNA. Because deletion of the RNase H region renders the protein partly chaperone-independent, the chaperones may be needed indirectly to relieve occlusion of the RNA-binding site by this domain. Inhibited by several reverse-transcriptase inhibitors: Lamivudine, Adefovir and Entecavir. Its function is as follows. Multifunctional enzyme that converts the viral RNA genome into dsDNA in viral cytoplasmic capsids. This enzyme displays a DNA polymerase activity that can copy either DNA or RNA templates, and a ribonuclease H (RNase H) activity that cleaves the RNA strand of RNA-DNA heteroduplexes in a partially processive 3'- to 5'-endonucleasic mode. Neo-synthesized pregenomic RNA (pgRNA) are encapsidated together with the P protein, and reverse-transcribed inside the nucleocapsid. Initiation of reverse-transcription occurs first by binding the epsilon loop on the pgRNA genome, and is initiated by protein priming, thereby the 5'-end of (-)DNA is covalently linked to P protein. Partial (+)DNA is synthesized from the (-)DNA template and generates the relaxed circular DNA (RC-DNA) genome. After budding and infection, the RC-DNA migrates in the nucleus, and is converted into a plasmid-like covalently closed circular DNA (cccDNA). The activity of P protein does not seem to be necessary for cccDNA generation, and is presumably released from (+)DNA by host nuclear DNA repair machinery. This chain is Protein P, found in Hepatitis B virus genotype F1 (isolate Argentina/sa11/2000) (HBV-F).